The following is a 552-amino-acid chain: Ferry endosomal RAB5 effector complex subunit 3 (552 aa).

The disordered stretch occupies residues 383 to 403; that stretch reads LKESLDSGNQNGGNDDKTKNA.

In terms of assembly, component of the FERRY complex composed of five subunits, TBCK, PPP1R21, FERRY3, CRYZL1 and GATD1 with a ratio of 1:2:1:2:4, respectively.

Its subcellular location is the cytoplasm. The protein localises to the early endosome. In terms of biological role, component of the FERRY complex (Five-subunit Endosomal Rab5 and RNA/ribosome intermediary). The FERRY complex directly interacts with mRNAs and RAB5A, and functions as a RAB5A effector involved in the localization and the distribution of specific mRNAs most likely by mediating their endosomal transport. The complex recruits mRNAs and ribosomes to early endosomes through direct mRNA-interaction. Plays a role in mast cell degranulation. The sequence is that of Ferry endosomal RAB5 effector complex subunit 3 from Homo sapiens (Human).